Reading from the N-terminus, the 60-residue chain is Ribosome biogenesis protein Nop10 (60 aa).

This sequence belongs to the NOP10 family.

Its function is as follows. Involved in ribosome biogenesis; more specifically in 18S rRNA pseudouridylation and in cleavage of pre-rRNA. This Haloquadratum walsbyi (strain DSM 16790 / HBSQ001) protein is Ribosome biogenesis protein Nop10.